The following is a 275-amino-acid chain: Formamidopyrimidine-DNA glycosylase (275 aa).

The active-site Schiff-base intermediate with DNA is the Pro2. Glu3 functions as the Proton donor in the catalytic mechanism. Residue Lys58 is the Proton donor; for beta-elimination activity of the active site. The DNA site is built by His93, Arg111, and Arg156. The segment at 241–275 (FVYDRAGQPCRVCGTPIRQIVQGQRSTYYCPTCQR) adopts an FPG-type zinc-finger fold. Arg265 acts as the Proton donor; for delta-elimination activity in catalysis.

This sequence belongs to the FPG family. As to quaternary structure, monomer. It depends on Zn(2+) as a cofactor.

The catalysed reaction is Hydrolysis of DNA containing ring-opened 7-methylguanine residues, releasing 2,6-diamino-4-hydroxy-5-(N-methyl)formamidopyrimidine.. It catalyses the reaction 2'-deoxyribonucleotide-(2'-deoxyribose 5'-phosphate)-2'-deoxyribonucleotide-DNA = a 3'-end 2'-deoxyribonucleotide-(2,3-dehydro-2,3-deoxyribose 5'-phosphate)-DNA + a 5'-end 5'-phospho-2'-deoxyribonucleoside-DNA + H(+). Involved in base excision repair of DNA damaged by oxidation or by mutagenic agents. Acts as a DNA glycosylase that recognizes and removes damaged bases. Has a preference for oxidized purines, such as 7,8-dihydro-8-oxoguanine (8-oxoG). Has AP (apurinic/apyrimidinic) lyase activity and introduces nicks in the DNA strand. Cleaves the DNA backbone by beta-delta elimination to generate a single-strand break at the site of the removed base with both 3'- and 5'-phosphates. The sequence is that of Formamidopyrimidine-DNA glycosylase from Burkholderia cenocepacia (strain ATCC BAA-245 / DSM 16553 / LMG 16656 / NCTC 13227 / J2315 / CF5610) (Burkholderia cepacia (strain J2315)).